A 485-amino-acid chain; its full sequence is GlcNAc-binding protein A (485 aa).

The first 29 residues, 1-29 (MKKQPQKTLLAIALSVVSGTAMSHGYVSA), serve as a signal peptide directing secretion. One can recognise a Chitin-binding type-4 domain in the interval 30–200 (VENGVAEARV…SFYNVIDVKF (171 aa)). One can recognise a Chitin-binding type-3 domain in the interval 437–478 (ADTKVLASDGAIYQCKPFPYSGYCVQWTPTATQYQPGTGSHW).

It belongs to the GbpA family.

It localises to the secreted. In terms of biological role, probably interacts with GlcNAc residues. May promote attachment to both epithelial cell surfaces and chitin. The chain is GlcNAc-binding protein A from Vibrio vulnificus (strain CMCP6).